The following is a 190-amino-acid chain: Peptidyl-tRNA hydrolase (190 aa).

Tyrosine 14 lines the tRNA pocket. Histidine 19 (proton acceptor) is an active-site residue. TRNA is bound by residues tyrosine 64, asparagine 66, and asparagine 112.

The protein belongs to the PTH family. Monomer.

It localises to the cytoplasm. The enzyme catalyses an N-acyl-L-alpha-aminoacyl-tRNA + H2O = an N-acyl-L-amino acid + a tRNA + H(+). In terms of biological role, hydrolyzes ribosome-free peptidyl-tRNAs (with 1 or more amino acids incorporated), which drop off the ribosome during protein synthesis, or as a result of ribosome stalling. Its function is as follows. Catalyzes the release of premature peptidyl moieties from peptidyl-tRNA molecules trapped in stalled 50S ribosomal subunits, and thus maintains levels of free tRNAs and 50S ribosomes. The polypeptide is Peptidyl-tRNA hydrolase (Chlorobium luteolum (strain DSM 273 / BCRC 81028 / 2530) (Pelodictyon luteolum)).